The primary structure comprises 1368 residues: DNA-directed RNA polymerase subunit beta (1368 aa).

The protein belongs to the RNA polymerase beta chain family. In terms of assembly, the RNAP catalytic core consists of 2 alpha, 1 beta, 1 beta' and 1 omega subunit. When a sigma factor is associated with the core the holoenzyme is formed, which can initiate transcription.

It catalyses the reaction RNA(n) + a ribonucleoside 5'-triphosphate = RNA(n+1) + diphosphate. Its function is as follows. DNA-dependent RNA polymerase catalyzes the transcription of DNA into RNA using the four ribonucleoside triphosphates as substrates. The sequence is that of DNA-directed RNA polymerase subunit beta from Ralstonia pickettii (strain 12J).